Here is a 255-residue protein sequence, read N- to C-terminus: MCELLGMSANVPTDICFSFTGLVQRGGGTGPHKDGWGITFYEGKGCRTFKDPQPSFNSPIAKLVQDYPIKSCSVVAHIRQANRGEVALENTHPFTRELWGRNWTYAHNGQLTGYKSLETGNFRPVGETDSEKAFCWLLHKLTQRYPRTPGNMAAVFKYIASLADELRQKGVFNMLLSDGRYVMAYCSTNLHWITRRAPFGVATLLDQDVEIDFSSQTTPNDVVTVIATQPLTGNETWQKIMPGEWRLFCLGERVV.

The active-site For GATase activity is the Cys2. The Glutamine amidotransferase type-2 domain occupies 2–251 (CELLGMSANV…PGEWRLFCLG (250 aa)).

The chain is Putative glutamine amidotransferase YafJ (yafJ) from Escherichia coli (strain K12).